The primary structure comprises 141 residues: Probable spanin, inner membrane subunit (141 aa).

A helical; Signal-anchor for type II membrane protein transmembrane segment spans residues 1–17; the sequence is MSRLMIVLVVLLSLAVA. Residues 18-141 are Periplasmic-facing; it reads GLFLVKHKNA…ESEPLPDAGQ (124 aa). Positions 119 to 141 are disordered; it reads ACTDASDCPQRMPESEPLPDAGQ.

As to quaternary structure, interacts (via C-terminus) with the spanin outer lipoprotein subunit (via C-terminus). Part of the spanin complex which spans the entire periplasmic space. The spanin complex is composed of spanin inner membrane subunit and spanin outer membrane subunit.

The protein resides in the host cell inner membrane. Functionally, component of the spanin complex that disrupts the host outer membrane and participates in cell lysis during virus exit. The spanin complex conducts the final step in host lysis by disrupting the outer membrane after holin and endolysin action have permeabilized the inner membrane and degraded the host peptidoglycans. Host outer membrane disruption is possibly due to local fusion between the inner and outer membrane performed by the spanin complex. The polypeptide is Probable spanin, inner membrane subunit (lysB) (Escherichia phage P2 (Bacteriophage P2)).